A 132-amino-acid chain; its full sequence is Small ribosomal subunit protein uS11 (132 aa).

Over residues 1–16 (MAAGMKGKRSRRRKER) the composition is skewed to basic residues. The segment at 1–20 (MAAGMKGKRSRRRKERKNVE) is disordered.

This sequence belongs to the universal ribosomal protein uS11 family. In terms of assembly, part of the 30S ribosomal subunit. Interacts with proteins S7 and S18. Binds to IF-3.

Its function is as follows. Located on the platform of the 30S subunit, it bridges several disparate RNA helices of the 16S rRNA. Forms part of the Shine-Dalgarno cleft in the 70S ribosome. This is Small ribosomal subunit protein uS11 from Clostridium botulinum (strain Loch Maree / Type A3).